A 266-amino-acid polypeptide reads, in one-letter code: Indole-3-glycerol phosphate synthase (266 aa).

This sequence belongs to the TrpC family.

The catalysed reaction is 1-(2-carboxyphenylamino)-1-deoxy-D-ribulose 5-phosphate + H(+) = (1S,2R)-1-C-(indol-3-yl)glycerol 3-phosphate + CO2 + H2O. The protein operates within amino-acid biosynthesis; L-tryptophan biosynthesis; L-tryptophan from chorismate: step 4/5. The sequence is that of Indole-3-glycerol phosphate synthase from Janthinobacterium sp. (strain Marseille) (Minibacterium massiliensis).